The chain runs to 283 residues: Diphthine methyl ester synthase (283 aa).

S-adenosyl-L-methionine-binding positions include Leu9, Asp84, Gly87, 112–113 (SI), Leu163, Met221, and His246.

Belongs to the diphthine synthase family.

Its subcellular location is the cytoplasm. It carries out the reaction 2-[(3S)-amino-3-carboxypropyl]-L-histidyl-[translation elongation factor 2] + 4 S-adenosyl-L-methionine = diphthine methyl ester-[translation elongation factor 2] + 4 S-adenosyl-L-homocysteine + 3 H(+). It functions in the pathway protein modification; peptidyl-diphthamide biosynthesis. S-adenosyl-L-methionine-dependent methyltransferase that catalyzes four methylations of the modified target histidine residue in translation elongation factor 2 (EF-2), to form an intermediate called diphthine methyl ester. The four successive methylation reactions represent the second step of diphthamide biosynthesis. This Schizosaccharomyces pombe (strain 972 / ATCC 24843) (Fission yeast) protein is Diphthine methyl ester synthase (dph5).